Here is a 102-residue protein sequence, read N- to C-terminus: NADH-quinone oxidoreductase subunit K (102 aa).

A run of 3 helical transmembrane segments spans residues 5-25 (LGHY…GIFL), 30-50 (IIVI…NLVA), and 62-82 (VFAL…LAVL).

The protein belongs to the complex I subunit 4L family. As to quaternary structure, NDH-1 is composed of 14 different subunits. Subunits NuoA, H, J, K, L, M, N constitute the membrane sector of the complex.

Its subcellular location is the cell inner membrane. The catalysed reaction is a quinone + NADH + 5 H(+)(in) = a quinol + NAD(+) + 4 H(+)(out). In terms of biological role, NDH-1 shuttles electrons from NADH, via FMN and iron-sulfur (Fe-S) centers, to quinones in the respiratory chain. The immediate electron acceptor for the enzyme in this species is believed to be ubiquinone. Couples the redox reaction to proton translocation (for every two electrons transferred, four hydrogen ions are translocated across the cytoplasmic membrane), and thus conserves the redox energy in a proton gradient. The protein is NADH-quinone oxidoreductase subunit K of Bradyrhizobium sp. (strain BTAi1 / ATCC BAA-1182).